The primary structure comprises 222 residues: Putative O-methyltransferase MAV_1364 (222 aa).

S-adenosyl-L-methionine is bound by residues V49, E71, 73–74 (GT), S79, D97, and I98. Position 145 (D145) interacts with substrate. Residue D147 participates in S-adenosyl-L-methionine binding.

The protein belongs to the class I-like SAM-binding methyltransferase superfamily. Cation-dependent O-methyltransferase family.

The chain is Putative O-methyltransferase MAV_1364 from Mycobacterium avium (strain 104).